Reading from the N-terminus, the 368-residue chain is Quinolinate synthase (368 aa).

Iminosuccinate-binding residues include His46 and Ser63. Residue Cys110 coordinates [4Fe-4S] cluster. Iminosuccinate contacts are provided by residues 141 to 143 (YVN) and Ser162. Position 230 (Cys230) interacts with [4Fe-4S] cluster. Residues 256 to 258 (HPE) and Thr273 contribute to the iminosuccinate site. Cys320 contributes to the [4Fe-4S] cluster binding site.

It belongs to the quinolinate synthase family. Type 3 subfamily. Requires [4Fe-4S] cluster as cofactor.

The protein localises to the cytoplasm. The enzyme catalyses iminosuccinate + dihydroxyacetone phosphate = quinolinate + phosphate + 2 H2O + H(+). Its pathway is cofactor biosynthesis; NAD(+) biosynthesis; quinolinate from iminoaspartate: step 1/1. Functionally, catalyzes the condensation of iminoaspartate with dihydroxyacetone phosphate to form quinolinate. This is Quinolinate synthase from Bacillus cereus (strain Q1).